Reading from the N-terminus, the 198-residue chain is Superoxide dismutase [Fe] (198 aa).

Fe cation-binding residues include His27, His74, Asp157, and His161.

Belongs to the iron/manganese superoxide dismutase family. As to quaternary structure, homodimer. The cofactor is Fe cation.

It carries out the reaction 2 superoxide + 2 H(+) = H2O2 + O2. Destroys superoxide anion radicals which are normally produced within the cells and which are toxic to biological systems. This is Superoxide dismutase [Fe] (sodB) from Pseudomonas putida (strain ATCC 47054 / DSM 6125 / CFBP 8728 / NCIMB 11950 / KT2440).